The chain runs to 188 residues: Elongation factor P (188 aa).

The protein belongs to the elongation factor P family.

The protein resides in the cytoplasm. The protein operates within protein biosynthesis; polypeptide chain elongation. Its function is as follows. Involved in peptide bond synthesis. Stimulates efficient translation and peptide-bond synthesis on native or reconstituted 70S ribosomes in vitro. Probably functions indirectly by altering the affinity of the ribosome for aminoacyl-tRNA, thus increasing their reactivity as acceptors for peptidyl transferase. This chain is Elongation factor P, found in Wolbachia sp. subsp. Drosophila simulans (strain wRi).